The primary structure comprises 355 residues: Vacuolar protein sorting-associated protein 37C (355 aa).

Residue serine 29 is modified to Phosphoserine. Positions 78–167 constitute a VPS37 C-terminal domain; that stretch reads VERCQEQKAK…RKPRASQELA (90 aa). The disordered stretch occupies residues 159 to 355; sequence KPRASQELAG…PPPGPAWPGY (197 aa). Composition is skewed to pro residues over residues 170-186 and 194-205; these read APPPRPPPPVRPVPQGT and PQPPSAMPPYPL. Over residues 246–257 the composition is skewed to low complexity; sequence PAAQPGPRGAAG. The span at 321-355 shows a compositional bias: pro residues; the sequence is PGQPQPSVPLQPPYPPGPAPPYGFPPPPGPAWPGY.

The protein belongs to the VPS37 family. As to quaternary structure, component of the ESCRT-I complex (endosomal sorting complex required for transport I) which consists of TSG101, VPS28, a VPS37 protein (VPS37A to -D) and MVB12A or MVB12B in a 1:1:1:1 stoichiometry. Interacts with TSG101, VPS28, MVB12A and MVB12B. Component of the ESCRT-I complex (endosomal sorting complex required for transport I) which consists of TSG101, VPS28, a VPS37 protein (VPS37A to -D) and UBAP1 in a 1:1:1:1 stoichiometry. Interacts with HGS and STAM2. Interacts with CEP55. Phosphorylated by TBK1.

The protein resides in the late endosome membrane. Its function is as follows. Component of the ESCRT-I complex, a regulator of vesicular trafficking process. Required for the sorting of endocytic ubiquitinated cargos into multivesicular bodies. May be involved in cell growth and differentiation. The sequence is that of Vacuolar protein sorting-associated protein 37C (VPS37C) from Pongo abelii (Sumatran orangutan).